The chain runs to 396 residues: Elongation factor Tu 1 (396 aa).

One can recognise a tr-type G domain in the interval 10–206 (KPHINVGTIG…AMDAHIPQPE (197 aa)). Residues 19–26 (GHVDHGKT) are G1. A GTP-binding site is contributed by 19 to 26 (GHVDHGKT). Thr-26 is a binding site for Mg(2+). Residues 60–64 (GITIA) are G2. A G3 region spans residues 81–84 (DCPG). Residues 81-85 (DCPGH) and 136-139 (NKAD) each bind GTP. The segment at 136–139 (NKAD) is G4. A G5 region spans residues 174–176 (SAL).

Belongs to the TRAFAC class translation factor GTPase superfamily. Classic translation factor GTPase family. EF-Tu/EF-1A subfamily. As to quaternary structure, monomer.

Its subcellular location is the cytoplasm. The catalysed reaction is GTP + H2O = GDP + phosphate + H(+). In terms of biological role, GTP hydrolase that promotes the GTP-dependent binding of aminoacyl-tRNA to the A-site of ribosomes during protein biosynthesis. The polypeptide is Elongation factor Tu 1 (Halorhodospira halophila (strain DSM 244 / SL1) (Ectothiorhodospira halophila (strain DSM 244 / SL1))).